The sequence spans 467 residues: Mothers against decapentaplegic homolog 9 (467 aa).

An MH1 domain is found at 16–140 (PAVKRLLGWK…YRRVETPVLP (125 aa)). The Zn(2+) site is built by cysteine 68, cysteine 113, cysteine 125, and histidine 130. The segment at 174 to 246 (NATYPDSFQQ…SETQSGQPVD (73 aa)) is disordered. The span at 205-220 (SYPHSPGSPSEPESPY) shows a compositional bias: low complexity. An MH2 domain is found at 273 to 467 (WCSVAYYELN…SPHNPISSVS (195 aa)).

This sequence belongs to the dwarfin/SMAD family. Interaction with the co-SMAD SMAD4. Interacts with PEBP2-alpha subunit. Interacts with RANBP3L. Post-translationally, phosphorylated on serine by BMP (bone morphogenetic proteins) type 1 receptor kinase. Expressed in heart, brain, placenta, lung, skeletal muscle, prostate, testis, ovary and small intestine. Also expressed in fetal brain, lung and kidney.

The protein localises to the cytoplasm. The protein resides in the nucleus. Transcriptional modulator activated by BMP (bone morphogenetic proteins) type 1 receptor kinase. SMAD9 is a receptor-regulated SMAD (R-SMAD). This is Mothers against decapentaplegic homolog 9 (SMAD9) from Homo sapiens (Human).